The sequence spans 198 residues: Cyclin-dependent kinase inhibitor 1B (198 aa).

Residues 1 to 11 (MSNVRVSNGSP) show a composition bias toward polar residues. The tract at residues 1–34 (MSNVRVSNGSPSLERMDARQAEHPKPSACRNLFG) is disordered. Ser-10 carries the post-translational modification Phosphoserine; by UHMK1. A compositionally biased stretch (basic and acidic residues) spans 14–25 (ERMDARQAEHPK). Residues 51–91 (DMEEASQRKWNFDFQNHNPLEGRYQWQEVDKGSLPEFYYRP) form an interaction with CDK2 region. At Tyr-74 the chain carries Phosphotyrosine; by SRC. The disordered stretch occupies residues 85 to 198 (PEFYYRPPRP…KKPGLRRHQT (114 aa)). Residue Tyr-88 is modified to Phosphotyrosine; by ABL, LYN and SRC. Position 89 is a phosphotyrosine (Tyr-89). Polar residues predominate over residues 104 to 124 (QESQDVSGSRQAVPSIGSQAY). Residues 153-169 (KRPAADDSSSQNKRANR) carry the Nuclear localization signal motif. Thr-170 bears the Phosphothreonine mark. The segment covering 175–186 (SDGSLNAGSVEQ) has biased composition (polar residues). The residue at position 187 (Thr-187) is a Phosphothreonine; by PKB/AKT1, CDK1 and CDK2. Thr-198 bears the Phosphothreonine; by CaMK1, PKB/AKT1, RPS6KA1, RPS6KA3 and PIM1 mark.

It belongs to the CDI family. As to quaternary structure, forms a ternary complex composed of CCNE1, CDK2 and CDKN1B. Interacts directly with CCNE1; the interaction is inhibited by CDK2-dependent phosphorylation on Thr-187. Interacts with COPS5, subunit of the COP9 signalosome complex; the interaction leads to CDKN1B degradation. Interacts with NUP50; the interaction leads to nuclear import and degradation of phosphorylated CDKN1B. Interacts with CCND1 and SNX6. Interacts (Thr-198-phosphorylated form) with 14-3-3 proteins, binds strongly YWHAQ, weakly YWHAE and YWHAH, but not YWHAB nor YWHAZ; the interaction with YWHAQ results in translocation to the cytoplasm. Interacts with AKT1 and LYN; the interactions lead to cytoplasmic mislocation, phosphorylation of CDKN1B and inhibition of cell cycle arrest. Forms a ternary complex with CCNA2 and CDK2; CDKN1B inhibits the kinase activity of CDK2 through conformational rearrangements. Interacts (unphosphorylated form) with CDK2. Forms a complex with CDK2 and SPDYA, but does not directly interact with SPDYA. Forms a ternary complex composed of cyclin D, CDK4 and CDKN1B. Interacts (phosphorylated on Tyr-88 and Tyr-89) with CDK4; the interaction is required for cyclin D and CDK4 complex assembly, induces nuclear translocation and activates the CDK4 kinase activity. Interacts with GRB2. Interacts with PIM1. Identified in a complex with SKP1, SKP2 and CKS1B. Interacts with UHMK1; the interaction leads to cytoplasmic mislocation, phosphorylation of CDKN1B and inhibition of cell cycle arrest. Also interacts with CDK1. Dephosphorylated on Thr-187 by PPM1H, leading to CDKN1B stability. Post-translationally, phosphorylated; phosphorylation occurs on serine, threonine and tyrosine residues. Phosphorylation on Ser-10 is the major site of phosphorylation in resting cells, takes place at the G(0)-G(1) phase and leads to protein stability. Phosphorylation on other sites is greatly enhanced by mitogens, growth factors, cMYC and in certain cancer cell lines. The phosphorylated form found in the cytoplasm is inactivate. Phosphorylation on Thr-198 is required for interaction with 14-3-3 proteins. Phosphorylation on Thr-187, by CDK1 and CDK2 leads to protein ubiquitination and proteasomal degradation. Tyrosine phosphorylation promotes this process. Phosphorylation by PKB/AKT1 can be suppressed by LY294002, an inhibitor of the catalytic subunit of PI3K. Phosphorylation on Tyr-88 and Tyr-89 has no effect on binding CDK2, but is required for binding CDK4. Dephosphorylated on tyrosine residues by G-CSF. Dephosphorylated on Thr-187 by PPM1H, leading to CDKN1B stability. Ubiquitinated; in the cytoplasm by the KPC complex (composed of RNF123/KPC1 and UBAC1/KPC2) and, in the nucleus, by SCF(SKP2). The latter requires prior phosphorylation on Thr-187. Ubiquitinated; by a TRIM21-containing SCF(SKP2)-like complex; leads to its degradation. In terms of processing, subject to degradation in the lysosome. Interaction with SNX6 promotes lysosomal degradation.

The protein localises to the nucleus. It is found in the cytoplasm. The protein resides in the endosome. Important regulator of cell cycle progression. Inhibits the kinase activity of CDK2 bound to cyclin A, but has little inhibitory activity on CDK2 bound to SPDYA. Involved in G1 arrest. Potent inhibitor of cyclin E- and cyclin A-CDK2 complexes. Forms a complex with cyclin type D-CDK4 complexes and is involved in the assembly, stability, and modulation of CCND1-CDK4 complex activation. Acts either as an inhibitor or an activator of cyclin type D-CDK4 complexes depending on its phosphorylation state and/or stoichometry. The protein is Cyclin-dependent kinase inhibitor 1B (CDKN1B) of Cricetulus griseus (Chinese hamster).